Consider the following 491-residue polypeptide: Calcium/calmodulin-dependent protein kinase type II delta 1 chain (491 aa).

Positions 13–271 constitute a Protein kinase domain; sequence YQLYEELGKG…AAEALKHPWI (259 aa). ATP is bound by residues 19-27 and K42; that span reads LGKGAFSVV. Catalysis depends on D135, which acts as the Proton acceptor. T286 is subject to Phosphothreonine. S314 is subject to Phosphoserine. Residues 315–354 are disordered; sequence SKNPYKKPDGVKEPQTTVIHNPTDGNKESSESTNTTIEDE. The span at 328-338 shows a compositional bias: polar residues; that stretch reads PQTTVIHNPTD. At T350 the chain carries Phosphothreonine.

It belongs to the protein kinase superfamily. CAMK Ser/Thr protein kinase family. CaMK subfamily. CAMK2 is composed of four different chains: alpha, beta, gamma, and delta. The different isoforms assemble into homo- or heteromultimeric holoenzymes composed of 8 to 12 subunits. First detected at the 18-somite stage where expression is restricted to somite boundaries. At 24 hpf, expression is elevated in epidermal tissue and in the hatching gland. After 24 hpf, expression dimishes, but persists at low levels along the dorsal trunk. At 48 hpf, expression is restricted at a low level to the forebrain. At 72 hpf, weak expression reappears along the entire dorsal trunk in discrete cell bodies.

It carries out the reaction L-seryl-[protein] + ATP = O-phospho-L-seryl-[protein] + ADP + H(+). It catalyses the reaction L-threonyl-[protein] + ATP = O-phospho-L-threonyl-[protein] + ADP + H(+). Its activity is regulated as follows. Autophosphorylation of CAMK2 plays an important role in the regulation of the kinase activity. CaM-kinase II (CAMK2) is a prominent kinase in the central nervous system. The sequence is that of Calcium/calmodulin-dependent protein kinase type II delta 1 chain from Danio rerio (Zebrafish).